Reading from the N-terminus, the 257-residue chain is Flavin-dependent thymidylate synthase (257 aa).

The 202-residue stretch at 1–202 (MNVKLVSYTR…PRLFRYVGPN (202 aa)) folds into the ThyX domain. FAD is bound by residues S55, 79–81 (RHR), and Q87. DUMP contacts are provided by residues 76-79 (QLVR), 87-91 (QMSHR), and R141. The short motif at 79–89 (RHRVASYTQMS) is the ThyX motif element. Residues 157–159 (NAR) and N163 each bind FAD. R168 is a dUMP binding site. R168 (involved in ionization of N3 of dUMP, leading to its activation) is an active-site residue.

This sequence belongs to the thymidylate synthase ThyX family. In terms of assembly, homotetramer. FAD is required as a cofactor.

The catalysed reaction is dUMP + (6R)-5,10-methylene-5,6,7,8-tetrahydrofolate + NADPH + H(+) = dTMP + (6S)-5,6,7,8-tetrahydrofolate + NADP(+). It participates in pyrimidine metabolism; dTTP biosynthesis. In terms of biological role, catalyzes the reductive methylation of 2'-deoxyuridine-5'-monophosphate (dUMP) to 2'-deoxythymidine-5'-monophosphate (dTMP) while utilizing 5,10-methylenetetrahydrofolate (mTHF) as the methyl donor, and NADPH and FADH(2) as the reductant. This is Flavin-dependent thymidylate synthase from Sulfurisphaera tokodaii (strain DSM 16993 / JCM 10545 / NBRC 100140 / 7) (Sulfolobus tokodaii).